We begin with the raw amino-acid sequence, 64 residues long: Large ribosomal subunit protein bL33 (64 aa).

It belongs to the bacterial ribosomal protein bL33 family.

This is Large ribosomal subunit protein bL33 from Rippkaea orientalis (strain PCC 8801 / RF-1) (Cyanothece sp. (strain PCC 8801)).